Reading from the N-terminus, the 227-residue chain is Cytochrome c oxidase subunit 2 (227 aa).

Over 1–14 (MAYPLQLGLQDATS) the chain is Mitochondrial intermembrane. A helical membrane pass occupies residues 15–45 (PIMEELTSFHDHTLMIVFLISSLVLYIISSM). Residues 46–59 (LTTKMTHTNTMDAQ) lie on the Mitochondrial matrix side of the membrane. Residues 60-87 (GVETIWTILPAAILVLIALPSLRILYMM) form a helical membrane-spanning segment. Over 88–227 (DEINNPALTV…HFENWSASMI (140 aa)) the chain is Mitochondrial intermembrane. Cu cation-binding residues include His161, Cys196, Glu198, Cys200, His204, and Met207. A Mg(2+)-binding site is contributed by Glu198.

This sequence belongs to the cytochrome c oxidase subunit 2 family. In terms of assembly, component of the cytochrome c oxidase (complex IV, CIV), a multisubunit enzyme composed of 14 subunits. The complex is composed of a catalytic core of 3 subunits MT-CO1, MT-CO2 and MT-CO3, encoded in the mitochondrial DNA, and 11 supernumerary subunits COX4I, COX5A, COX5B, COX6A, COX6B, COX6C, COX7A, COX7B, COX7C, COX8 and NDUFA4, which are encoded in the nuclear genome. The complex exists as a monomer or a dimer and forms supercomplexes (SCs) in the inner mitochondrial membrane with NADH-ubiquinone oxidoreductase (complex I, CI) and ubiquinol-cytochrome c oxidoreductase (cytochrome b-c1 complex, complex III, CIII), resulting in different assemblies (supercomplex SCI(1)III(2)IV(1) and megacomplex MCI(2)III(2)IV(2)). Found in a complex with TMEM177, COA6, COX18, COX20, SCO1 and SCO2. Interacts with TMEM177 in a COX20-dependent manner. Interacts with COX20. Interacts with COX16. Cu cation is required as a cofactor.

Its subcellular location is the mitochondrion inner membrane. It catalyses the reaction 4 Fe(II)-[cytochrome c] + O2 + 8 H(+)(in) = 4 Fe(III)-[cytochrome c] + 2 H2O + 4 H(+)(out). Its function is as follows. Component of the cytochrome c oxidase, the last enzyme in the mitochondrial electron transport chain which drives oxidative phosphorylation. The respiratory chain contains 3 multisubunit complexes succinate dehydrogenase (complex II, CII), ubiquinol-cytochrome c oxidoreductase (cytochrome b-c1 complex, complex III, CIII) and cytochrome c oxidase (complex IV, CIV), that cooperate to transfer electrons derived from NADH and succinate to molecular oxygen, creating an electrochemical gradient over the inner membrane that drives transmembrane transport and the ATP synthase. Cytochrome c oxidase is the component of the respiratory chain that catalyzes the reduction of oxygen to water. Electrons originating from reduced cytochrome c in the intermembrane space (IMS) are transferred via the dinuclear copper A center (CU(A)) of subunit 2 and heme A of subunit 1 to the active site in subunit 1, a binuclear center (BNC) formed by heme A3 and copper B (CU(B)). The BNC reduces molecular oxygen to 2 water molecules using 4 electrons from cytochrome c in the IMS and 4 protons from the mitochondrial matrix. This is Cytochrome c oxidase subunit 2 (MT-CO2) from Acomys ignitus (Fiery spiny mouse).